Reading from the N-terminus, the 264-residue chain is Vacuolar protein sorting-associated protein 75 (264 aa).

The residue at position 3 (Ser3) is a Phosphoserine. Residues 223–264 (LEDEEGESGLSADGDSEDDDGSLGEVDLPLSDEEPSSKKRKV) form a disordered region.

The protein belongs to the nucleosome assembly protein (NAP) family. Homodimer. Homotetramer. Forms a complex with RTT109; consisting of a VPS75 dimer contacted by two RTT109 subunits. Interacts with RTT109; the interaction is direct. Interacts with ASF1. Interacts with histone H3/H4 heterodimers and heterotetramers via histone H3.

It localises to the nucleus. In terms of biological role, histone chaperone which acts as a cofactor stimulating histone H3 acetylation by RTT109. Preferentially stimulates histone H3 'Lys-9' acetylation by RTT109. May also stimulate histone H3 'Lys-56' acetylation by RTT109. Assembles nucleosomes (in vitro). The protein is Vacuolar protein sorting-associated protein 75 (VPS75) of Saccharomyces cerevisiae (strain ATCC 204508 / S288c) (Baker's yeast).